The chain runs to 249 residues: ATP synthase subunit a (249 aa).

5 helical membrane-spanning segments follow: residues 33 to 53, 92 to 112, 131 to 151, 196 to 216, and 217 to 237; these read GQVIAVSWIVFAILIIASIAA, LPFIGTLFLFIFVSNWLGALI, INTTVALALLTSLAYFYAGIS, LVVAVLVFLVPLVVPLPLMAL, and GLFTSAIQALVFATLAGAYIH.

It belongs to the ATPase A chain family. In terms of assembly, F-type ATPases have 2 components, CF(1) - the catalytic core - and CF(0) - the membrane proton channel. CF(1) has five subunits: alpha(3), beta(3), gamma(1), delta(1), epsilon(1). CF(0) has four main subunits: a, b, b' and c.

It localises to the cellular thylakoid membrane. In terms of biological role, key component of the proton channel; it plays a direct role in the translocation of protons across the membrane. This Microcystis aeruginosa (strain NIES-843 / IAM M-2473) protein is ATP synthase subunit a.